A 1079-amino-acid polypeptide reads, in one-letter code: Lon protease homolog, mitochondrial (1079 aa).

The N-terminal 60 residues, 1–60 (MLRPRTYVRKLAWRCPRKSQLGLRLATSVSSHKSLPLPMNFDISHSQSAFRAYQDIIHRN), are a transit peptide targeting the mitochondrion. Residues 61–116 (KSVGDDEPSQRSENENNPSESDKDSNQDPETPKKDKESENDKEPEKEKDIENDNKV) are compositionally biased toward basic and acidic residues. Disordered regions lie at residues 61–158 (KSVG…VDPV) and 262–285 (LTTPSSEKEAKSEEPSKEDAESFP). A compositionally biased stretch (polar residues) spans 117 to 131 (SSESNENVTLASSNT). Residues 132–143 (GGAAPPNGNNNG) are compositionally biased toward low complexity. The region spanning 165–391 (LLAIPMKDRP…RALELLKVEL (227 aa)) is the Lon N-terminal domain. The segment covering 262–281 (LTTPSSEKEAKSEEPSKEDA) has biased composition (basic and acidic residues). 543-550 (GPPGTGKT) contributes to the ATP binding site. The segment covering 756–765 (ALDSSKEKEG) has biased composition (basic and acidic residues). The tract at residues 756-832 (ALDSSKEKEG…SEEDQQPEPK (77 aa)) is disordered. A compositionally biased stretch (low complexity) spans 768-779 (ASSEEANVNSES). A compositionally biased stretch (polar residues) spans 780 to 802 (TKSNTSQAEPVAESSTDISTKSK). Residues 803–818 (VASEKIETKEKKETNK) show a composition bias toward basic and acidic residues. Residues 865 to 1053 (FPPPGVATGL…QEVFDKIFPN (189 aa)) enclose the Lon proteolytic domain. Active-site residues include S959 and K1002.

This sequence belongs to the peptidase S16 family. Homohexamer or homoheptamer. Organized in a ring with a central cavity.

It is found in the mitochondrion matrix. It carries out the reaction Hydrolysis of proteins in presence of ATP.. In terms of biological role, ATP-dependent serine protease that mediates the selective degradation of misfolded, unassembled or oxidatively damaged polypeptides as well as certain short-lived regulatory proteins in the mitochondrial matrix. May also have a chaperone function in the assembly of inner membrane protein complexes. Participates in the regulation of mitochondrial gene expression and in the maintenance of the integrity of the mitochondrial genome. Binds to mitochondrial DNA in a site-specific manner. In Debaryomyces hansenii (strain ATCC 36239 / CBS 767 / BCRC 21394 / JCM 1990 / NBRC 0083 / IGC 2968) (Yeast), this protein is Lon protease homolog, mitochondrial.